Here is a 278-residue protein sequence, read N- to C-terminus: Glutamate racemase (278 aa).

Substrate is bound by residues 13–14 (DS) and 45–46 (YG). Residue C76 is the Proton donor/acceptor of the active site. 77 to 78 (NT) serves as a coordination point for substrate. The active-site Proton donor/acceptor is the C185. 186–187 (TH) is a substrate binding site.

This sequence belongs to the aspartate/glutamate racemases family.

It carries out the reaction L-glutamate = D-glutamate. Its pathway is cell wall biogenesis; peptidoglycan biosynthesis. Its function is as follows. Provides the (R)-glutamate required for cell wall biosynthesis. The chain is Glutamate racemase from Gloeothece citriformis (strain PCC 7424) (Cyanothece sp. (strain PCC 7424)).